The primary structure comprises 218 residues: Methylthioribulose-1-phosphate dehydratase (218 aa).

2 residues coordinate Zn(2+): His-107 and His-109.

This sequence belongs to the aldolase class II family. MtnB subfamily. Zn(2+) is required as a cofactor.

The enzyme catalyses 5-(methylsulfanyl)-D-ribulose 1-phosphate = 5-methylsulfanyl-2,3-dioxopentyl phosphate + H2O. Its pathway is amino-acid biosynthesis; L-methionine biosynthesis via salvage pathway; L-methionine from S-methyl-5-thio-alpha-D-ribose 1-phosphate: step 2/6. Functionally, catalyzes the dehydration of methylthioribulose-1-phosphate (MTRu-1-P) into 2,3-diketo-5-methylthiopentyl-1-phosphate (DK-MTP-1-P). This chain is Methylthioribulose-1-phosphate dehydratase, found in Xylella fastidiosa (strain 9a5c).